A 432-amino-acid polypeptide reads, in one-letter code: 3-phosphoshikimate 1-carboxyvinyltransferase (432 aa).

Residues Lys-22, Ser-23, and Arg-27 each coordinate 3-phosphoshikimate. Position 22 (Lys-22) interacts with phosphoenolpyruvate. Residues Gly-96 and Arg-127 each contribute to the phosphoenolpyruvate site. 3-phosphoshikimate contacts are provided by Ser-173, Ser-174, Gln-175, Ser-201, Asp-316, Asn-339, and Lys-343. Position 175 (Gln-175) interacts with phosphoenolpyruvate. The active-site Proton acceptor is the Asp-316. Arg-347, Arg-391, and Lys-416 together coordinate phosphoenolpyruvate.

The protein belongs to the EPSP synthase family. As to quaternary structure, monomer.

It localises to the cytoplasm. It carries out the reaction 3-phosphoshikimate + phosphoenolpyruvate = 5-O-(1-carboxyvinyl)-3-phosphoshikimate + phosphate. The protein operates within metabolic intermediate biosynthesis; chorismate biosynthesis; chorismate from D-erythrose 4-phosphate and phosphoenolpyruvate: step 6/7. In terms of biological role, catalyzes the transfer of the enolpyruvyl moiety of phosphoenolpyruvate (PEP) to the 5-hydroxyl of shikimate-3-phosphate (S3P) to produce enolpyruvyl shikimate-3-phosphate and inorganic phosphate. This Actinobacillus pleuropneumoniae serotype 7 (strain AP76) protein is 3-phosphoshikimate 1-carboxyvinyltransferase.